Here is a 30-residue protein sequence, read N- to C-terminus: Cysteine-rich venom protein hematin (30 aa).

Belongs to the CRISP family. In terms of processing, contains 8 disulfide bonds. In terms of tissue distribution, expressed by the venom gland.

It localises to the secreted. Its function is as follows. Inhibits calcium-activated potassium channels (KCa), voltage-gated potassium channel (Kv), and the calcium release channel/ryanodine receptor (RyR). The sequence is that of Cysteine-rich venom protein hematin from Hemachatus haemachatus (Rinkhals).